Here is a 494-residue protein sequence, read N- to C-terminus: UDP-N-acetylmuramoyl-L-alanyl-D-glutamate--L-lysine ligase (494 aa).

S30 contacts UDP-N-acetyl-alpha-D-muramoyl-L-alanyl-D-glutamate. 110–116 (GTNGKTS) contributes to the ATP binding site. UDP-N-acetyl-alpha-D-muramoyl-L-alanyl-D-glutamate-binding positions include 152 to 153 (TT), S179, and R187. An N6-carboxylysine modification is found at K219. An L-lysine recognition motif motif is present at residues 406–409 (DNPA).

Belongs to the MurCDEF family. MurE subfamily. Carboxylation is probably crucial for Mg(2+) binding and, consequently, for the gamma-phosphate positioning of ATP.

Its subcellular location is the cytoplasm. The enzyme catalyses UDP-N-acetyl-alpha-D-muramoyl-L-alanyl-D-glutamate + L-lysine + ATP = UDP-N-acetyl-alpha-D-muramoyl-L-alanyl-gamma-D-glutamyl-L-lysine + ADP + phosphate + H(+). Its pathway is cell wall biogenesis; peptidoglycan biosynthesis. In terms of biological role, catalyzes the addition of L-lysine to the nucleotide precursor UDP-N-acetylmuramoyl-L-alanyl-D-glutamate (UMAG) in the biosynthesis of bacterial cell-wall peptidoglycan. This chain is UDP-N-acetylmuramoyl-L-alanyl-D-glutamate--L-lysine ligase, found in Staphylococcus aureus (strain bovine RF122 / ET3-1).